A 207-amino-acid polypeptide reads, in one-letter code: Putative zinc finger protein 137 (207 aa).

A C2H2-type 1 zinc finger spans residues 72-94 (CKCNDCHKVFSNATTIANHWRIH). The segment at 100-122 (YKCNKCGKIFRHRSYLAVYQRTH) adopts a C2H2-type 2; degenerate zinc-finger fold. A C2H2-type 3; degenerate zinc finger spans residues 128–150 (YKYHDCGKVFSQASSYAKHRRIH). 2 C2H2-type zinc fingers span residues 156 to 178 (HKCDDCGKVLTSRSHLIRHQRIH) and 184 to 206 (YKCLKCGKVFSLWALHAEHQKIH).

Belongs to the krueppel C2H2-type zinc-finger protein family.

It localises to the nucleus. In terms of biological role, may be involved in transcriptional regulation. This Homo sapiens (Human) protein is Putative zinc finger protein 137 (ZNF137P).